The sequence spans 339 residues: Ketol-acid reductoisomerase (NADP(+)) (339 aa).

Positions 1–182 (MRVYYDRDAD…GGGRSGIIET (182 aa)) constitute a KARI N-terminal Rossmann domain. NADP(+)-binding positions include 24–27 (YGSQ), Lys48, Ser51, Thr53, and 83–86 (DELQ). Residue His108 is part of the active site. Gly134 lines the NADP(+) pocket. The KARI C-terminal knotted domain occupies 183–328 (NFKEECETDL…AKLRGMMPWI (146 aa)). The Mg(2+) site is built by Asp191, Glu195, Glu227, and Glu231. Substrate is bound at residue Ser252.

The protein belongs to the ketol-acid reductoisomerase family. Requires Mg(2+) as cofactor.

It catalyses the reaction (2R)-2,3-dihydroxy-3-methylbutanoate + NADP(+) = (2S)-2-acetolactate + NADPH + H(+). The enzyme catalyses (2R,3R)-2,3-dihydroxy-3-methylpentanoate + NADP(+) = (S)-2-ethyl-2-hydroxy-3-oxobutanoate + NADPH + H(+). The protein operates within amino-acid biosynthesis; L-isoleucine biosynthesis; L-isoleucine from 2-oxobutanoate: step 2/4. It participates in amino-acid biosynthesis; L-valine biosynthesis; L-valine from pyruvate: step 2/4. Functionally, involved in the biosynthesis of branched-chain amino acids (BCAA). Catalyzes an alkyl-migration followed by a ketol-acid reduction of (S)-2-acetolactate (S2AL) to yield (R)-2,3-dihydroxy-isovalerate. In the isomerase reaction, S2AL is rearranged via a Mg-dependent methyl migration to produce 3-hydroxy-3-methyl-2-ketobutyrate (HMKB). In the reductase reaction, this 2-ketoacid undergoes a metal-dependent reduction by NADPH to yield (R)-2,3-dihydroxy-isovalerate. This chain is Ketol-acid reductoisomerase (NADP(+)), found in Sinorhizobium fredii (strain NBRC 101917 / NGR234).